A 442-amino-acid chain; its full sequence is D-serine dehydratase (442 aa).

The residue at position 118 (Lys-118) is an N6-(pyridoxal phosphate)lysine.

Belongs to the serine/threonine dehydratase family. DsdA subfamily. Monomer. It depends on pyridoxal 5'-phosphate as a cofactor.

It carries out the reaction D-serine = pyruvate + NH4(+). The sequence is that of D-serine dehydratase from Shigella flexneri serotype 5b (strain 8401).